Reading from the N-terminus, the 97-residue chain is MKSVVFASLIASALAVPTELAPRTDVSSLCPAGLYSVPQCCATDILGVARLDCKAPKQTPRNADEFKNICAKGGQQAACCVVPVAGQSLFCMTPVGI.

The first 15 residues, 1 to 15, serve as a signal peptide directing secretion; the sequence is MKSVVFASLIASALA. Intrachain disulfides connect C30-C79, C40-C53, and C80-C91.

It belongs to the cerato-ulmin hydrophobin family.

Its subcellular location is the secreted. The protein localises to the cell wall. It localises to the vacuole. The protein resides in the cytoplasmic vesicle. Aerial growth, conidiation, and dispersal of filamentous fungi in the environment rely upon a capability of their secreting small amphipathic proteins called hydrophobins (HPBs) with low sequence identity. Class I can self-assemble into an outermost layer of rodlet bundles on aerial cell surfaces, conferring cellular hydrophobicity that supports fungal growth, development and dispersal; whereas Class II form highly ordered films at water-air interfaces through intermolecular interactions but contribute nothing to the rodlet structure. Hyd2A contributes to certain cell wall-related features, such as hydrophobicity but is not involved in cell wall-related events during fungal proliferation in host hemocoel. Does not contribute to conidial hydrophobicity. Involved in insect hemocoel colonization independent of cell hydrophobicity, as well as in the asexual development. This is Class II hydrophobin A from Beauveria bassiana (strain ARSEF 2860) (White muscardine disease fungus).